The sequence spans 222 residues: Superoxide dismutase [Mn], mitochondrial (222 aa).

A mitochondrion-targeting transit peptide spans 1–24; sequence MLSRAVCGTGRQLAPALGYLGSRQ. His-50 contributes to the Mn(2+) binding site. Tyr-58 carries the 3'-nitrotyrosine modification. 2 positions are modified to N6-acetyllysine; alternate: Lys-68 and Lys-75. N6-succinyllysine; alternate is present on residues Lys-68 and Lys-75. His-98 contacts Mn(2+). At Lys-114 the chain carries N6-acetyllysine. N6-acetyllysine; alternate is present on residues Lys-122 and Lys-130. Residues Lys-122 and Lys-130 each carry the N6-succinyllysine; alternate modification. Residues Asp-183 and His-187 each contribute to the Mn(2+) site. At Lys-202 the chain carries N6-acetyllysine.

It belongs to the iron/manganese superoxide dismutase family. Homotetramer. The cofactor is Mn(2+). Nitrated under oxidative stress. Nitration coupled with oxidation inhibits the catalytic activity. Post-translationally, acetylation at Lys-122 decreases enzymatic activity. Deacetylated by SIRT3 upon exposure to ionizing radiations or after long fasting. In terms of processing, polyubiquitinated; leading to proteasomal degradation. Deubiquitinated by USP36 which increases protein stability.

It is found in the mitochondrion matrix. The catalysed reaction is 2 superoxide + 2 H(+) = H2O2 + O2. Functionally, destroys superoxide anion radicals which are normally produced within the cells and which are toxic to biological systems. The protein is Superoxide dismutase [Mn], mitochondrial (SOD2) of Macaca nemestrina (Pig-tailed macaque).